A 241-amino-acid chain; its full sequence is 6-phosphogluconolactonase (241 aa).

Belongs to the glucosamine/galactosamine-6-phosphate isomerase family. 6-phosphogluconolactonase subfamily.

The enzyme catalyses 6-phospho-D-glucono-1,5-lactone + H2O = 6-phospho-D-gluconate + H(+). It participates in carbohydrate degradation; pentose phosphate pathway; D-ribulose 5-phosphate from D-glucose 6-phosphate (oxidative stage): step 2/3. Its function is as follows. Hydrolysis of 6-phosphogluconolactone to 6-phosphogluconate. The polypeptide is 6-phosphogluconolactonase (pgl) (Treponema pallidum (strain Nichols)).